The following is a 375-amino-acid chain: Aminomethyltransferase (375 aa).

The protein belongs to the GcvT family. As to quaternary structure, the glycine cleavage system is composed of four proteins: P, T, L and H.

The catalysed reaction is N(6)-[(R)-S(8)-aminomethyldihydrolipoyl]-L-lysyl-[protein] + (6S)-5,6,7,8-tetrahydrofolate = N(6)-[(R)-dihydrolipoyl]-L-lysyl-[protein] + (6R)-5,10-methylene-5,6,7,8-tetrahydrofolate + NH4(+). The glycine cleavage system catalyzes the degradation of glycine. This is Aminomethyltransferase from Ralstonia pickettii (strain 12J).